Reading from the N-terminus, the 741-residue chain is uncharacterized protein (741 aa).

A signal peptide spans 1 to 22 (MKSVKIIIILALALLIQISHIA).

This is an uncharacterized protein from Archaeoglobus fulgidus (strain ATCC 49558 / DSM 4304 / JCM 9628 / NBRC 100126 / VC-16).